Consider the following 400-residue polypeptide: 3-phenylpropionate/cinnamic acid dioxygenase ferredoxin--NAD(+) reductase component (400 aa).

An FAD-binding site is contributed by 5–36; that stretch reads TIIIVGGGQAAAMAAASLRQQGFTGELHLFSD. 146-174 provides a ligand contact to NAD(+); that stretch reads SVVIVGAGTIGLELAASATQRRCKVTVIE.

The protein belongs to the bacterial ring-hydroxylating dioxygenase ferredoxin reductase family. This dioxygenase system consists of four proteins: the two subunits of the hydroxylase component (HcaE and HcaF), a ferredoxin (HcaC) and a ferredoxin reductase (HcaD). The cofactor is FAD.

The catalysed reaction is 2 reduced [2Fe-2S]-[ferredoxin] + NAD(+) + H(+) = 2 oxidized [2Fe-2S]-[ferredoxin] + NADH. The protein operates within aromatic compound metabolism; 3-phenylpropanoate degradation. In terms of biological role, part of the multicomponent 3-phenylpropionate dioxygenase, that converts 3-phenylpropionic acid (PP) and cinnamic acid (CI) into 3-phenylpropionate-dihydrodiol (PP-dihydrodiol) and cinnamic acid-dihydrodiol (CI-dihydrodiol), respectively. In Shigella sonnei (strain Ss046), this protein is 3-phenylpropionate/cinnamic acid dioxygenase ferredoxin--NAD(+) reductase component.